Reading from the N-terminus, the 492-residue chain is Catalase-1/2 (492 aa).

Residues H65 and N138 contribute to the active site. Y348 is a heme binding site.

The protein belongs to the catalase family. In terms of assembly, homotetramer. Heme serves as cofactor.

It is found in the cytoplasm. The protein localises to the cytosol. The protein resides in the peroxisome matrix. The catalysed reaction is 2 H2O2 = O2 + 2 H2O. Its function is as follows. Catalyzes the degradation of hydrogen peroxide (H(2)O(2)) generated by peroxisomal oxidases to water and oxygen, thereby protecting cells from the toxic effects of hydrogen peroxide. This chain is Catalase-1/2 (CAT1), found in Glycine max (Soybean).